A 437-amino-acid polypeptide reads, in one-letter code: Epsilon-sarcoglycan (437 aa).

At 1–317 the chain is on the extracellular side; it reads MQLPRWWELG…LKSRDYYTDF (317 aa). N-linked (GlcNAc...) asparagine glycosylation occurs at Asn200. A helical transmembrane segment spans residues 318–338; it reads LITLAVPSAVALVLFLILAYI. The Cytoplasmic segment spans residues 339–437; it reads MCCRREGVEK…QQQTTGKWYP (99 aa).

This sequence belongs to the sarcoglycan alpha/epsilon family. In terms of processing, N-glycosylated. Post-translationally, ubiquitinated, leading to its degradation by the proteasome.

The protein localises to the cell membrane. It localises to the sarcolemma. The protein resides in the cytoplasm. It is found in the cytoskeleton. Its subcellular location is the cell projection. The protein localises to the dendrite. It localises to the golgi apparatus. In terms of biological role, component of the sarcoglycan complex, a subcomplex of the dystrophin-glycoprotein complex which forms a link between the F-actin cytoskeleton and the extracellular matrix. The chain is Epsilon-sarcoglycan from Pongo abelii (Sumatran orangutan).